A 727-amino-acid chain; its full sequence is Elongation factor 2 (727 aa).

Positions 19–260 (EQIRNMGICA…MSIKHLPNPL (242 aa)) constitute a tr-type G domain. Residues 28-35 (AHIDHGKT), 94-98 (DTPGH), and 148-151 (NKVD) contribute to the GTP site. Residue histidine 603 is modified to Diphthamide.

Belongs to the TRAFAC class translation factor GTPase superfamily. Classic translation factor GTPase family. EF-G/EF-2 subfamily.

It is found in the cytoplasm. Its function is as follows. Catalyzes the GTP-dependent ribosomal translocation step during translation elongation. During this step, the ribosome changes from the pre-translocational (PRE) to the post-translocational (POST) state as the newly formed A-site-bound peptidyl-tRNA and P-site-bound deacylated tRNA move to the P and E sites, respectively. Catalyzes the coordinated movement of the two tRNA molecules, the mRNA and conformational changes in the ribosome. This chain is Elongation factor 2, found in Methanococcus maripaludis (strain DSM 14266 / JCM 13030 / NBRC 101832 / S2 / LL).